Consider the following 988-residue polypeptide: MEPQVTLNVTFKNETQSFLVSDPENTTWADVEAMVKVSFDLNTIQIKYLDEENEEISINSQGEYEEALKMANIKQGNQLQMQVHEGYHVVDEALPKNVVENQAAARTGKKPLAHYSSLVRVLGSDMKTTEEPAPEQCSSAPCDTDQPQDKPPDWFTSYLEMFREQVVKETVEKLEQRLQEKLVLQKPLLSSSPTEVSMPISEETLFLPENQFSWHIACSHCQKRIVGVRYQCSLCPSYNICEDCEAGPYTHDTNHVLLKLRRPVVISSEPFFYSKYSAPRLPAALEQVRLQKQVDKNFVKAEKQRLRAEKKQRKAEVKELKKQLKLHRKIHLWNSIHGLQSPKSPLGRPESLLQSNTLMLPLQPCAPVMPTLSAAFVDENLPDGTHLQPGTKFIKHWRMKNTGNVKWNTDTKLKFMWGNLTLASTEKKDVLVPCLKAGHVGVVSVEFIAPTLEGTYTSHWRLSHKGQQFGPRVWCSIIVDPFPSSESPDNVEGDRISSSKADDFSCEQEEAFLLAEEEIPLGEVTKQTEGTGASASQKTRRAASERELYIPSVDLLTAQDLLSFELLDINIVQELERVPHNTPVDMTPCMSPLPHDSPLIEKPGLGQIQEESEGAGFKAPPDSTVSAKRKAETPASVEETEEDLSGTQFVCETVIRSLTLDAAPDHNPPCRQRSPQRELQLYSTEGQQPLVLPGFCRKDSSLKFALPEEGPRGDEREEIVHIVEEEVVEEEEEVQDEEVQSQSSASSEDYIIILPECFDTSRPLGDSMYSSALSQPGLERGAEGEPGIESGLEPTEARERLPERESQPQEQSISDILTTSQPLDTVPLVPEVAGLPAALSRSAPCGQCESSGVDSPGVDSPATMHEVPPAPDDIRGEPRGSTGLANSRQRSCDHSRHHNGSSIAGGLVKGALSVAASAYKALFSGPPVTAQPIVSEDQTTALMAHLFEMGFCDRQLNLRLLRKHNYNILQVVTELLQVNNNDWYSHRY.

The 83-residue stretch at 4–86 folds into the PB1 domain; the sequence is QVTLNVTFKN…NQLQMQVHEG (83 aa). Serine 117 is subject to Phosphoserine. The interval 126 to 150 is disordered; it reads MKTTEEPAPEQCSSAPCDTDQPQDK. The segment at 213-265 adopts a ZZ-type zinc-finger fold; the sequence is SWHIACSHCQKRIVGVRYQCSLCPSYNICEDCEAGPYTHDTNHVLLKLRRPVV. 8 residues coordinate Zn(2+): cysteine 218, cysteine 221, cysteine 232, cysteine 235, cysteine 241, cysteine 244, histidine 251, and histidine 255. ATG8 family proteins-binding stretches follow at residues 543-637 and 745-756; these read ASER…PASV and ASSEDYIIILPE. Phosphothreonine is present on threonine 587. Serine 591, serine 597, and serine 626 each carry phosphoserine. The tract at residues 611-644 is disordered; the sequence is ESEGAGFKAPPDSTVSAKRKAETPASVEETEEDL. Disordered regions lie at residues 768-822 and 841-900; these read MYSS…TSQP and RSAP…HHNG. Basic and acidic residues predominate over residues 795–807; it reads TEARERLPERESQ. Residues 808–822 show a composition bias toward polar residues; that stretch reads PQEQSISDILTTSQP. Serine 860 is modified (phosphoserine). The UBA domain occupies 935–979; the sequence is SEDQTTALMAHLFEMGFCDRQLNLRLLRKHNYNILQVVTELLQVN.

In terms of assembly, homooligomer and heterooligomer. Interacts with TRIM55. Interacts with titin/TTN. Interacts with RNF29, USP8, MAP1LC3A, MAP1LC3B, MAP1LC3C, GABARAP, GABARAPL1 and GABARAPL2. Binds to ubiquitin and ubiquitinated proteins. Interacts with SQSTM1. Interacts with TAX1BP1. Interacts with IRF3; this interaction mediates autophagic degradation of IRF3. Interacts with IL12A and IL12B. Post-translationally, phosphorylated by GSK3A; this phosphorylation inhibits NBR1 involvement in the formation of ubiquitinated protein aggregates. Expressed in brain.

It localises to the cytoplasm. The protein localises to the cytoplasmic vesicle. Its subcellular location is the autophagosome. The protein resides in the lysosome. It is found in the myofibril. It localises to the sarcomere. The protein localises to the m line. Functionally, ubiquitin-binding autophagy adapter that participates in different processes including host defense or intracellular homeostasis. Possesses a double function during the selective autophagy by acting as a shuttle bringing ubiquitinated proteins to autophagosomes and also by participating in the formation of protein aggregates. Plays a role in the regulation of the innate immune response by modulating type I interferon production and targeting ubiquitinated IRF3 for autophagic degradation. In response to oxidative stress, promotes an increase in SQSTM1 levels, phosphorylation, and body formation by preventing its autophagic degradation. In turn, activates the KEAP1-NRF2/NFE2L2 antioxidant pathway. Also plays non-autophagy role by mediating the shuttle of IL-12 to late endosome for subsequent secretion. This chain is Next to BRCA1 gene 1 protein (Nbr1), found in Mus musculus (Mouse).